The chain runs to 1709 residues: Acrosomal protein KIAA1210 (1709 aa).

Disordered stretches follow at residues Pro207–Ala226, Pro239–Pro275, Pro451–Thr663, Pro763–Glu973, Leu1211–Ala1382, Thr1408–His1516, Ala1539–Tyr1571, and Phe1589–Gly1653. A compositionally biased stretch (basic residues) spans Pro257 to Ser272. The segment covering Glu473–Gly490 has biased composition (basic and acidic residues). Polar residues-rich tracts occupy residues Ala494–Thr505 and Asp514–Tyr527. Residues Glu595 to Gln608 show a composition bias toward low complexity. Residues Pro651–Thr663 show a composition bias toward basic and acidic residues. Positions Glu777–Glu794 are enriched in acidic residues. 5 stretches are compositionally biased toward polar residues: residues Lys886–Ser941, Phe1288–Gln1299, His1332–Gly1350, Pro1366–His1376, and Asp1457–Gln1469. Residues Ser1502–Gly1513 are compositionally biased toward low complexity. A compositionally biased stretch (basic and acidic residues) spans Gln1542–Ala1552.

Interacts with TOP2B.

Its subcellular location is the cytoplasmic vesicle. The protein localises to the secretory vesicle. It localises to the acrosome. In Homo sapiens (Human), this protein is Acrosomal protein KIAA1210.